The sequence spans 63 residues: Large ribosomal subunit protein uL29 (63 aa).

It belongs to the universal ribosomal protein uL29 family.

The polypeptide is Large ribosomal subunit protein uL29 (Bordetella avium (strain 197N)).